Reading from the N-terminus, the 636-residue chain is MTDDFAPDGQLAKAIPGFKPREPQRQMAVAVTQAIEKGQPLVVEAGTGTGKTYAYLAPALRAKKKVIISTGSKALQDQLYSRDLPTVSKALKYTGNVALLKGRSNYLCLERLEQQALAGGDLPVQILSDVILLRSWSNQTVDGDISTCVSVAEDSQAWPLVTSTNDNCLGSDCPMYKDCFVVKARKKAMDADVVVVNHHLFLADMVVKESGFGELIPEADVMIFDEAHQLPDIASQYFGQSLSSRQLLDLAKDITIAYRTELKDTQQLQKCADRLAQSAQDFRLQLGEPGYRGNLRELLANPQIQRAFLLLDDTLELCYDVAKLSLGRSALLDAAFERATLYRTRLKRLKEINQPGYSYWYECTSRHFTLALTPLSVADKFKELMAQKPGSWIFTSATLSVNDDLHHFTSRLGIEQAESLLLPSPFDYSRQALLCVLRNLPQTNQPGSARQLAAMLRPIIEANNGRCFMLCTSHAMMRDLAEQFRATMTLPVLLQGETSKGQLLQQFVSAGNALLVATSSFWEGVDVRGDTLSLVIIDKLPFTSPDDPLLKARMEDCRLRGGDPFDEVQLPDAVITLKQGVGRLIRDADDRGVLVICDNRLVMRPYGATFLASLPPAPRTRDIARAVRFLAIPSSR.

The Helicase ATP-binding domain maps to 10–272 (QLAKAIPGFK…KDTQQLQKCA (263 aa)). 45 to 52 (AGTGTGKT) serves as a coordination point for ATP. Residues Cys-108, Cys-168, Cys-173, and Cys-179 each contribute to the [4Fe-4S] cluster site. A DEAH box motif is present at residues 225–228 (DEAH).

The protein belongs to the helicase family. DinG subfamily. Interacts with the DNA polymerase III subunit Chi (holC), probably as a 1:1 complex. The cofactor is [4Fe-4S] cluster. Mg(2+) serves as cofactor.

It carries out the reaction Couples ATP hydrolysis with the unwinding of duplex DNA at the replication fork by translocating in the 5'-3' direction. This creates two antiparallel DNA single strands (ssDNA). The leading ssDNA polymer is the template for DNA polymerase III holoenzyme which synthesizes a continuous strand.. It catalyses the reaction ATP + H2O = ADP + phosphate + H(+). With respect to regulation, non-hydrolyzable ATP analogs ATP-gamma-S and adenylyl-imidodiphosphate (AMP-PNP) inhibit helicase activity. DNA-dependent ATPase and 5'-3' DNA helicase. Has single-stranded (ss)DNA-dependent ATPase activity and 5'-3' helicase activity on forked DNA; both activities were measure in a YoaA:HolC (chi) complex. Requires a 20-35 nucleotide (nt) 5'-ssDNA tail; dsDNA with a 20 nt gap is also unwound. Unwinds damaged 3' nascent ends (such as those terminated by 3' azidothymidine (AZT), 3' dideoxy-C or an abasic site on the translocating strand), to promote repair and AZT excision. Without HolC the protein has much lower activity which could be due to YoaA instability or helicase stimulation by HolC. Genetically identified as involved in the repair of replication forks and tolerance of the chain-terminating nucleoside analog AZT. May act in proofreading during nucleotide misincorporation, it appears to aid in the removal of potential A-to-T transversion mutations in ndk mutants. This chain is ATP-dependent DNA helicase YoaA (yoaA), found in Escherichia coli (strain K12).